The chain runs to 124 residues: Protein S100-A16 (124 aa).

The EF-hand 1; degenerate domain occupies 23–37 (VSKHSLVKNKISKSS). The region spanning 54-89 (GNRKAADKLIQNLDANHDGRICFDEYWTMIGGITSP) is the EF-hand 2 domain. Positions 67, 69, 71, 73, and 78 each coordinate Ca(2+). Residues 97–124 (QECQQESQQECQQESQQESQQESQQGSS) form a disordered region.

This sequence belongs to the S-100 family. Homodimer. Interacts with TP53. As to expression, ubiquitous. Widely distributed throughout the adult brain and predominantly expressed within specific astrocyte populations. Expressed at high level in adipose tissues of obese animals.

It localises to the nucleus. The protein localises to the nucleolus. The protein resides in the cytoplasm. Calcium-binding protein. Binds one calcium ion per monomer. Can promote differentiation of adipocytes (in vitro). Overexpression in 3T3-L1 preadipocytes increases their proliferation, enhances adipogenesis and reduces insulin-stimulated glucose uptake. This is Protein S100-A16 from Mus musculus (Mouse).